An 89-amino-acid polypeptide reads, in one-letter code: RNA-binding protein Hfq (89 aa).

Positions 14 to 73 constitute a Sm domain; that stretch reads DPYLNALRKEKINVAIYLVNGVKLQGRVDSFDQFVVLLRSNVTQMVYKHAISTIVPARDP.

The protein belongs to the Hfq family. Homohexamer.

RNA chaperone that binds small regulatory RNA (sRNAs) and mRNAs to facilitate mRNA translational regulation in response to envelope stress, environmental stress and changes in metabolite concentrations. Also binds with high specificity to tRNAs. In Hydrogenovibrio crunogenus (strain DSM 25203 / XCL-2) (Thiomicrospira crunogena), this protein is RNA-binding protein Hfq.